The following is a 192-amino-acid chain: Nucleoside triphosphate pyrophosphatase (192 aa).

The active-site Proton acceptor is the Asp-73.

It belongs to the Maf family. Requires a divalent metal cation as cofactor.

Its subcellular location is the cytoplasm. It catalyses the reaction a ribonucleoside 5'-triphosphate + H2O = a ribonucleoside 5'-phosphate + diphosphate + H(+). The catalysed reaction is a 2'-deoxyribonucleoside 5'-triphosphate + H2O = a 2'-deoxyribonucleoside 5'-phosphate + diphosphate + H(+). In terms of biological role, nucleoside triphosphate pyrophosphatase. May have a dual role in cell division arrest and in preventing the incorporation of modified nucleotides into cellular nucleic acids. This chain is Nucleoside triphosphate pyrophosphatase, found in Ehrlichia ruminantium (strain Gardel).